The sequence spans 291 residues: Acetyl-coenzyme A carboxylase carboxyl transferase subunit beta (291 aa).

The region spanning 29 to 291 is the CoA carboxyltransferase N-terminal domain; that stretch reads IMTKCPDCKK…TGGDLEWLEN (263 aa). Positions 33, 36, 52, and 55 each coordinate Zn(2+). The C4-type zinc finger occupies 33–55; that stretch reads CPDCKKIMLTKELDKNLRVCMNC.

The protein belongs to the AccD/PCCB family. Acetyl-CoA carboxylase is a heterohexamer composed of biotin carboxyl carrier protein (AccB), biotin carboxylase (AccC) and two subunits each of ACCase subunit alpha (AccA) and ACCase subunit beta (AccD). Requires Zn(2+) as cofactor.

The protein resides in the cytoplasm. The enzyme catalyses N(6)-carboxybiotinyl-L-lysyl-[protein] + acetyl-CoA = N(6)-biotinyl-L-lysyl-[protein] + malonyl-CoA. Its pathway is lipid metabolism; malonyl-CoA biosynthesis; malonyl-CoA from acetyl-CoA: step 1/1. Component of the acetyl coenzyme A carboxylase (ACC) complex. Biotin carboxylase (BC) catalyzes the carboxylation of biotin on its carrier protein (BCCP) and then the CO(2) group is transferred by the transcarboxylase to acetyl-CoA to form malonyl-CoA. The sequence is that of Acetyl-coenzyme A carboxylase carboxyl transferase subunit beta from Bacillus licheniformis (strain ATCC 14580 / DSM 13 / JCM 2505 / CCUG 7422 / NBRC 12200 / NCIMB 9375 / NCTC 10341 / NRRL NRS-1264 / Gibson 46).